A 146-amino-acid polypeptide reads, in one-letter code: MKLHELKPAEGSRKERNRVGRGVATGNGKTSGRGHKGQKARSGGGVRPGFEGGQLPLFRRLPKRGFTNINRKEYAIVNLDQLNKFEDGTEVTPALLVESGVVKNEKSGIKILGNGSLDKKLTVKAHKFSASAAEAIDAKGGAHEVI.

Positions 1-18 are enriched in basic and acidic residues; sequence MKLHELKPAEGSRKERNR. The segment at 1–54 is disordered; the sequence is MKLHELKPAEGSRKERNRVGRGVATGNGKTSGRGHKGQKARSGGGVRPGFEGGQ. The segment covering 42-52 has biased composition (gly residues); sequence SGGGVRPGFEG.

Belongs to the universal ribosomal protein uL15 family. In terms of assembly, part of the 50S ribosomal subunit.

In terms of biological role, binds to the 23S rRNA. The polypeptide is Large ribosomal subunit protein uL15 (Staphylococcus aureus (strain Mu3 / ATCC 700698)).